Reading from the N-terminus, the 148-residue chain is Snaclec convulxin subunit beta (148 aa).

An N-terminal signal peptide occupies residues Met1–Ala23. Disulfide bonds link Cys27/Cys38, Cys55/Cys144, and Cys121/Cys136. In terms of domain architecture, C-type lectin spans Tyr34–Ala148.

This sequence belongs to the snaclec family. In terms of assembly, tetramer of heterodimers of alpha and beta subunits (alphabeta)(4); disulfide-linked. Expressed by the venom gland.

Its subcellular location is the secreted. In terms of biological role, snake venom lectin that activates platelets by binding to the platelet collagen receptor glycoprotein VI (GP6). The indirect activation of integrin alpha-IIb/beta-3 (ITGA2B/ITGB3) also induced by the toxin is upstream the cytoskeletal translocation of GPIb, FcRgamma (FCER1G) and 14-3-3zeta (YWHAZ). This Crotalus durissus terrificus (South American rattlesnake) protein is Snaclec convulxin subunit beta.